The sequence spans 43 residues: Snake venom metalloproteinase crotalin (43 aa).

The region spanning 1–43 (LLRRKSHDHAQNHDGDKCLRGASLGYYQSFLNQYKPQCILNKP) is the Peptidase M12B domain. Residue histidine 13 coordinates Zn(2+).

Belongs to the venom metalloproteinase (M12B) family. P-I subfamily. Monomer. Zn(2+) serves as cofactor. Post-translationally, this protein autoproteolytically degrades to 10 kDa and 14 kDa fragments in the presence of SDS. Interestingly, the two fragments, as well as reduced crotalin are able to bind vWF, indicating that the binding activity does not require a specific protein conformation. Expressed by the venom gland.

The protein resides in the secreted. Snake venom zinc metalloproteinase that inhibits ristocin-induced platelet aggregation by abolishing the binding of von Willebrand factor (vWF) to platelet glycoprotein Ib alpha (GPIBA) through the cleavage of both GP1BA and vWF. Also has fibrinogenolytic activities by degrading the alpha- (FGA) and beta-chain (FGB) of fibrinogen. In vivo, induces a slight hemorrhage when applied to chick chorioallantoic membrane and has potent antithrombic effect. The protein is Snake venom metalloproteinase crotalin of Crotalus atrox (Western diamondback rattlesnake).